Reading from the N-terminus, the 228-residue chain is uncharacterized protein (228 aa).

Residues 1 to 34 form a disordered region; that stretch reads MPRDTKPYSRPANAPRPGVKTERSNQFKAASTKY.

This is an uncharacterized protein from Orgyia pseudotsugata (Douglas-fir tussock moth).